Here is a 20-residue protein sequence, read N- to C-terminus: Cytochrome c oxidase subunit 8B, mitochondrial (20 aa).

The disordered stretch occupies residues Leu1–Thr20.

It belongs to the cytochrome c oxidase VIII family. In terms of assembly, component of the cytochrome c oxidase (complex IV, CIV), a multisubunit enzyme composed of 14 subunits. The complex is composed of a catalytic core of 3 subunits MT-CO1, MT-CO2 and MT-CO3, encoded in the mitochondrial DNA, and 11 supernumerary subunits COX4I, COX5A, COX5B, COX6A, COX6B, COX6C, COX7A, COX7B, COX7C, COX8 and NDUFA4, which are encoded in the nuclear genome. The complex exists as a monomer or a dimer and forms supercomplexes (SCs) in the inner mitochondrial membrane with NADH-ubiquinone oxidoreductase (complex I, CI) and ubiquinol-cytochrome c oxidoreductase (cytochrome b-c1 complex, complex III, CIII), resulting in different assemblies (supercomplex SCI(1)III(2)IV(1) and megacomplex MCI(2)III(2)IV(2)).

The protein resides in the mitochondrion inner membrane. It functions in the pathway energy metabolism; oxidative phosphorylation. Its function is as follows. Component of the cytochrome c oxidase, the last enzyme in the mitochondrial electron transport chain which drives oxidative phosphorylation. The respiratory chain contains 3 multisubunit complexes succinate dehydrogenase (complex II, CII), ubiquinol-cytochrome c oxidoreductase (cytochrome b-c1 complex, complex III, CIII) and cytochrome c oxidase (complex IV, CIV), that cooperate to transfer electrons derived from NADH and succinate to molecular oxygen, creating an electrochemical gradient over the inner membrane that drives transmembrane transport and the ATP synthase. Cytochrome c oxidase is the component of the respiratory chain that catalyzes the reduction of oxygen to water. Electrons originating from reduced cytochrome c in the intermembrane space (IMS) are transferred via the dinuclear copper A center (CU(A)) of subunit 2 and heme A of subunit 1 to the active site in subunit 1, a binuclear center (BNC) formed by heme A3 and copper B (CU(B)). The BNC reduces molecular oxygen to 2 water molecules using 4 electrons from cytochrome c in the IMS and 4 protons from the mitochondrial matrix. The sequence is that of Cytochrome c oxidase subunit 8B, mitochondrial from Oncorhynchus mykiss (Rainbow trout).